We begin with the raw amino-acid sequence, 241 residues long: MLTKKQLQLLEFIHKRLQKDGVPPSFDEMKTALDLRSKSGIHRLITALEERGFIRRLAHRARAIEVIRLPDSLGGGGALGAASDGFQPKVIAGGRGDSADGGAAAELKPVADTGATELTIMGRIAAGVPIEAINQAAAHVAVPNAMLSSSGQHYALEVRGDSMIDAGINDGDVVVIRETDAADNGDIVVALVEGHEATLKRFERKGRMIELHAANPAYPTRSYTEDQVKVQGRLVGLIRTY.

A DNA-binding region (H-T-H motif) is located at residues 26-46 (FDEMKTALDLRSKSGIHRLIT). Residues Ser-162 and Lys-200 each act as for autocatalytic cleavage activity in the active site.

The protein belongs to the peptidase S24 family. As to quaternary structure, homodimer.

The enzyme catalyses Hydrolysis of Ala-|-Gly bond in repressor LexA.. Functionally, represses a number of genes involved in the response to DNA damage (SOS response), including recA and lexA. In the presence of single-stranded DNA, RecA interacts with LexA causing an autocatalytic cleavage which disrupts the DNA-binding part of LexA, leading to derepression of the SOS regulon and eventually DNA repair. The protein is LexA repressor of Ruegeria sp. (strain TM1040) (Silicibacter sp.).